The chain runs to 269 residues: Shikimate dehydrogenase (NADP(+)) (269 aa).

Shikimate is bound by residues 19 to 21 (SLS) and Thr-66. The Proton acceptor role is filled by Lys-70. An NADP(+)-binding site is contributed by Asp-82. Positions 91 and 106 each coordinate shikimate. Residues 130 to 134 (GAGGA), 153 to 158 (NRTKEK), and Ile-214 contribute to the NADP(+) site. Tyr-216 serves as a coordination point for shikimate. Position 235 (Gly-235) interacts with NADP(+). Gln-242 lines the shikimate pocket.

This sequence belongs to the shikimate dehydrogenase family. Homodimer.

It carries out the reaction shikimate + NADP(+) = 3-dehydroshikimate + NADPH + H(+). It participates in metabolic intermediate biosynthesis; chorismate biosynthesis; chorismate from D-erythrose 4-phosphate and phosphoenolpyruvate: step 4/7. Involved in the biosynthesis of the chorismate, which leads to the biosynthesis of aromatic amino acids. Catalyzes the reversible NADPH linked reduction of 3-dehydroshikimate (DHSA) to yield shikimate (SA). This is Shikimate dehydrogenase (NADP(+)) from Aquifex aeolicus (strain VF5).